The primary structure comprises 273 residues: Large ribosomal subunit protein uL2 (273 aa).

Disordered regions lie at residues 35-54 and 222-273; these read DKKD…TRHI and GMAM…RRNK. Residues 229-239 are compositionally biased toward basic and acidic residues; it reads DHPHGGGEGRN. Basic residues predominate over residues 253 to 273; it reads KGFKTRKNKRTDKYIVRRRNK.

The protein belongs to the universal ribosomal protein uL2 family. In terms of assembly, part of the 50S ribosomal subunit. Forms a bridge to the 30S subunit in the 70S ribosome.

One of the primary rRNA binding proteins. Required for association of the 30S and 50S subunits to form the 70S ribosome, for tRNA binding and peptide bond formation. It has been suggested to have peptidyltransferase activity; this is somewhat controversial. Makes several contacts with the 16S rRNA in the 70S ribosome. The polypeptide is Large ribosomal subunit protein uL2 (Aeromonas hydrophila subsp. hydrophila (strain ATCC 7966 / DSM 30187 / BCRC 13018 / CCUG 14551 / JCM 1027 / KCTC 2358 / NCIMB 9240 / NCTC 8049)).